Reading from the N-terminus, the 1584-residue chain is MRGQAAAPGPVWILAPLLLLLLLLGRRARAAAGADAGPGPEPCATLVQGKFFGYFSAAAVFPANASRCSWTLRNPDPRRYTLYMKVAKAPVPCSGPGRVRTYQFDSFLESTRTYLGVESFDEVLRLCDPSAPLAFLQASKQFLQMRRQQPPQHDGLRPRAGPPGPTDDFSVEYLVVGNRNPSRAACQMLCRWLDACLAGSRSSHPCGIMQTPCACLGGEAGGPAAGPLAPRGDVCLRDAVAGGPENCLTSLTQDRGGHGATGGWKLWSLWGECTRDCGGGLQTRTRTCLPAPGVEGGGCEGVLEEGRQCNREACGPAGRTSSRSQSLRSTDARRREELGDELQQFGFPAPQTGDPAAEEWSPWSVCSSTCGEGWQTRTRFCVSSSYSTQCSGPLREQRLCNNSAVCPVHGAWDEWSPWSLCSSTCGRGFRDRTRTCRPPQFGGNPCEGPEKQTKFCNIALCPGRAVDGNWNEWSSWSACSASCSQGRQQRTRECNGPSYGGAECQGHWVETRDCFLQQCPVDGKWQAWASWGSCSVTCGAGSQRRERVCSGPFFGGAACQGPQDEYRQCGTQRCPEPHEICDEDNFGAVIWKETPAGEVAAVRCPRNATGLILRRCELDEEGIAYWEPPTYIRCVSIDYRNIQMMTREHLAKAQRGLPGEGVSEVIQTLVEISQDGTSYSGDLLSTIDVLRNMTEIFRRAYYSPTPGDVQNFVQILSNLLAEENRDKWEEAQLAGPNAKELFRLVEDFVDVIGFRMKDLRDAYQVTDNLVLSIHKLPASGATDISFPMKGWRATGDWAKVPEDRVTVSKSVFSTGLTEADEASVFVVGTVLYRNLGSFLALQRNTTVLNSKVISVTVKPPPRSLRTPLEIEFAHMYNGTTNQTCILWDETDVPSSSAPPQLGPWSWRGCRTVPLDALRTRCLCDRLSTFAILAQLSADANMEKATLPSVTLIVGCGVSSLTLLMLVIIYVSVWRYIRSERSVILINFCLSIISSNALILIGQTQTRNKVVCTLVAAFLHFFFLSSFCWVLTEAWQSYMAVTGHLRNRLIRKRFLCLGWGLPALVVAISVGFTKAKGYSTMNYCWLSLEGGLLYAFVGPAAAVVLVNMVIGILVFNKLVSKDGITDKKLKERAGASLWSSCVVLPLLALTWMSAVLAVTDRRSALFQILFAVFDSLEGFVIVMVHCILRREVQDAVKCRVVDRQEEGNGDSGGSFQNGHAQLMTDFEKDVDLACRSVLNKDIAACRTATITGTLKRPSLPEEEKLKLAHAKGPPTNFNSLPANVSKLHLHGSPRYPGGPLPDFPNHSLTLKRDKAPKSSFVGDGDIFKKLDSELSRAQEKALDTSYVILPTATATLRPKPKEEPKYSIHIDQMPQTRLIHLSTAPEASLPARSPPSRQPPSGGPPEAPPAQPPPPPPPPPPPPQQPLPPPPNLEPAPPSLGDPGEPAAHPGPSTGPSTKNENVATLSVSSLERRKSRYAELDFEKIMHTRKRHQDMFQDLNRKLQHAAEKDKEVLGPDSKPEKQQTPNKRPWESLRKAHGTPTWVKKELEPLQPSPLELRSVEWERSGATIPLVGQDIIDLQTEV.

The signal sequence occupies residues 1 to 30; the sequence is MRGQAAAPGPVWILAPLLLLLLLLGRRARA. The Extracellular portion of the chain corresponds to 31 to 948; that stretch reads AAGADAGPGP…ANMEKATLPS (918 aa). An N-linked (GlcNAc...) asparagine glycan is attached at asparagine 64. The disordered stretch occupies residues 146 to 167; the sequence is RRQQPPQHDGLRPRAGPPGPTD. Residues 261 to 315 form the TSP type-1 1 domain; that stretch reads TGGWKLWSLWGECTRDCGGGLQTRTRTCLPAPGVEGGGCEGVLEEGRQCNREACG. Cystine bridges form between cysteine 273-cysteine 309, cysteine 277-cysteine 314, and cysteine 288-cysteine 299. The disordered stretch occupies residues 313 to 335; that stretch reads ACGPAGRTSSRSQSLRSTDARRR. The segment covering 319 to 329 has biased composition (low complexity); that stretch reads RTSSRSQSLRS. TSP type-1 domains are found at residues 354-407, 409-462, 467-520, and 522-575; these read DPAA…AVCP, HGAW…ALCP, DGNW…QQCP, and DGKW…QRCP. 14 cysteine pairs are disulfide-bonded: cysteine 366–cysteine 400, cysteine 370–cysteine 406, cysteine 381–cysteine 390, cysteine 421–cysteine 456, cysteine 425–cysteine 461, cysteine 436–cysteine 446, cysteine 479–cysteine 514, cysteine 483–cysteine 519, cysteine 494–cysteine 504, cysteine 534–cysteine 569, cysteine 538–cysteine 574, cysteine 549–cysteine 559, cysteine 581–cysteine 616, and cysteine 604–cysteine 634. The N-linked (GlcNAc...) asparagine glycan is linked to asparagine 401. An N-linked (GlcNAc...) asparagine glycan is attached at asparagine 607. At threonine 609 the chain carries Phosphothreonine. N-linked (GlcNAc...) asparagine glycosylation is found at asparagine 692, asparagine 844, asparagine 877, and asparagine 881. In terms of domain architecture, GAIN-B spans 760 to 939; the sequence is RDAYQVTDNL…AILAQLSADA (180 aa). Disulfide bonds link cysteine 884–cysteine 921 and cysteine 909–cysteine 923. Positions 884-939 are GPS; sequence CILWDETDVPSSSAPPQLGPWSWRGCRTVPLDALRTRCLCDRLSTFAILAQLSADA. Residues 927–943 form an N-terminal stalk following vasculostatin-120 cleavage which is not required for signaling activity region; sequence STFAILAQLSADANMEK. The helical transmembrane segment at 949–969 threads the bilayer; the sequence is VTLIVGCGVSSLTLLMLVIIY. Residues 970–980 lie on the Cytoplasmic side of the membrane; that stretch reads VSVWRYIRSER. A helical transmembrane segment spans residues 981–1001; that stretch reads SVILINFCLSIISSNALILIG. The Extracellular segment spans residues 1002–1008; it reads QTQTRNK. The chain crosses the membrane as a helical span at residues 1009–1029; the sequence is VVCTLVAAFLHFFFLSSFCWV. Topologically, residues 1030–1052 are cytoplasmic; the sequence is LTEAWQSYMAVTGHLRNRLIRKR. A helical membrane pass occupies residues 1053-1073; the sequence is FLCLGWGLPALVVAISVGFTK. Residues 1074-1093 lie on the Extracellular side of the membrane; the sequence is AKGYSTMNYCWLSLEGGLLY. Residues 1094-1114 traverse the membrane as a helical segment; it reads AFVGPAAAVVLVNMVIGILVF. The Cytoplasmic portion of the chain corresponds to 1115-1136; sequence NKLVSKDGITDKKLKERAGASL. A helical membrane pass occupies residues 1137–1157; the sequence is WSSCVVLPLLALTWMSAVLAV. The Extracellular segment spans residues 1158-1166; the sequence is TDRRSALFQ. Residues 1167-1187 traverse the membrane as a helical segment; sequence ILFAVFDSLEGFVIVMVHCIL. Over 1188–1584 the chain is Cytoplasmic; it reads RREVQDAVKC…QDIIDLQTEV (397 aa). Residues 1365-1584 are involved in interaction with MAGI1; it reads YSIHIDQMPQ…QDIIDLQTEV (220 aa). 2 disordered regions span residues 1385 to 1475 and 1501 to 1548; these read EASL…RRKS and RKLQ…KKEL. Residues 1391–1439 are compositionally biased toward pro residues; sequence RSPPSRQPPSGGPPEAPPAQPPPPPPPPPPPPQQPLPPPPNLEPAPPSL. A compositionally biased stretch (polar residues) spans 1453–1469; sequence TGPSTKNENVATLSVSS. Phosphoserine is present on serine 1469. Basic and acidic residues predominate over residues 1501–1522; it reads RKLQHAAEKDKEVLGPDSKPEK. The interval 1581 to 1584 is indispensable for interaction with MAGI1; it reads QTEV.

It belongs to the G-protein coupled receptor 2 family. LN-TM7 subfamily. As to quaternary structure, interacts with ELMO1 and DOCK. When bound to ELMO1 and DOCK1, acts as a module to promote apoptotic cell engulfment. Interacts with MDM2; the interaction results in inhibition of MDM2-mediated ubiquitination and degradation of DLG4/PSD95. Interacts with PARD3 and TIAM1; the interaction is required for correct dendritic. localization of PARD3 and TIAM1 and for dendritic spine formation. Interacts with MAGI1. Interacts with MAGI3. Interacts with BAIAP2. Interacts with PHYHIP. Interacts with DLG4 (via PDZ domain). Vasculostatin-120: Interacts with CD36. Vasculostatin-120: Interacts with ARRB2. Interacts with BAIAP3; this interaction is direct. Proteolytically cleaved to produce vasculostatin-40 and vasculostatin-120. Vasculostatin-40 is the major form and is produced through proteolytic cleavage by MMP14 between residues 321 and 329 with cleavage likely to be between Ser-326 and Leu-327. Post-translationally, ubiquitinated. Expressed in brain (at protein level). Expressed on mononuclear phagocytes and monocyte-derived macrophages in the gastric mucosa (at protein level). Expressed in normal pancreatic tissue but not in pancreatic tumor tissue. Reduced or no expression is observed in some glioblastomas.

The protein resides in the cell membrane. Its subcellular location is the cell projection. The protein localises to the phagocytic cup. It localises to the cell junction. It is found in the focal adhesion. The protein resides in the dendritic spine. Its subcellular location is the postsynaptic density. The protein localises to the secreted. Phosphatidylserine receptor which enhances the engulfment of apoptotic cells. Also mediates the binding and engulfment of Gram-negative bacteria. Stimulates production of reactive oxygen species by macrophages in response to Gram-negative bacteria, resulting in enhanced microbicidal macrophage activity. In the gastric mucosa, required for recognition and engulfment of apoptotic gastric epithelial cells. Promotes myoblast fusion. Activates the Rho pathway in a G-protein-dependent manner. Inhibits MDM2-mediated ubiquitination and degradation of DLG4/PSD95, promoting DLG4 stability and regulating synaptic plasticity. Required for the formation of dendritic spines by ensuring the correct localization of PARD3 and TIAM1. Potent inhibitor of angiogenesis in brain and may play a significant role as a mediator of the p53/TP53 signal in suppression of glioblastoma. Functionally, inhibits angiogenesis in a CD36-dependent manner. In terms of biological role, inhibits angiogenesis. The chain is Adhesion G protein-coupled receptor B1 from Homo sapiens (Human).